A 1683-amino-acid polypeptide reads, in one-letter code: Phospholipase D1 (1683 aa).

Disordered regions lie at residues 1–150 (MSNV…AYTQ), 173–198 (LKSS…QQVN), 259–289 (ILDI…SIPR), and 384–416 (VMEK…NITS). Serine 2 carries the N-acetylserine modification. Serine 8 and serine 30 each carry phosphoserine. 3 stretches are compositionally biased toward basic and acidic residues: residues 20-34 (SVTE…RPDE), 63-82 (NGKE…DRNL), and 90-112 (SLDH…ENMH). Residues 116–125 (NNLHSSNNNV) are compositionally biased toward low complexity. The segment covering 141–150 (RRSSSVAYTQ) has biased composition (polar residues). A Phosphoserine modification is found at serine 145. Over residues 263–279 (TNSNHNHRGNNNNNTGE) the composition is skewed to low complexity. One can recognise a PX domain in the interval 291-487 (SSIISISSNV…EFYELSPLGN (197 aa)). The segment covering 392-404 (KPSSAASAPHTSE) has biased composition (polar residues). A compositionally biased stretch (low complexity) spans 405–416 (NNNNDNGSNITS). One can recognise a PH domain in the interval 496-664 (QGKQGYLVIR…SSIIKMSTST (169 aa)). 2 PLD phosphodiesterase domains span residues 791 to 818 (YFWA…CYGR) and 1091 to 1118 (EQLY…NERS). Catalysis depends on residues histidine 796, lysine 798, aspartate 803, histidine 1096, lysine 1098, and aspartate 1103. Residues 1430–1465 (KDMRRHLSSSTESTRNGSNSLPLNEKSNEGESTNVD) are disordered. Residues 1437–1451 (SSSTESTRNGSNSLP) show a composition bias toward polar residues. A Phosphoserine modification is found at serine 1461. Threonine 1462 carries the post-translational modification Phosphothreonine.

Belongs to the phospholipase D family. Interacts with SRF1.

It catalyses the reaction a 1,2-diacyl-sn-glycero-3-phosphocholine + H2O = a 1,2-diacyl-sn-glycero-3-phosphate + choline + H(+). Its activity is regulated as follows. Activity is dependent of phosphatidylinositol 4,5-bisphosphate and the regulator SRF1. Inhibited by magnesium. Its function is as follows. Required for meiosis and spore formation. Seems to be involved in the coordinate induction of late meiotic events. PLD activity is induced under sporulation conditions and seems to be necessary to complete the meiotic cycle, but not for vegetative cell growth. In Saccharomyces cerevisiae (strain ATCC 204508 / S288c) (Baker's yeast), this protein is Phospholipase D1 (SPO14).